A 240-amino-acid polypeptide reads, in one-letter code: Poxin (240 aa).

His-46 serves as the catalytic Proton donor. Tyr-181 (shared with catalytic histidine of dimeric partner) is an active-site residue. The Proton acceptor; shared with catalytic histidine of dimeric partner role is filled by Lys-185.

It belongs to the poxin family. In terms of assembly, homodimer.

The enzyme catalyses 2',3'-cGAMP + H2O = Gp(2'-5')Ap(3') + H(+). Nuclease that cleaves host 2',3'-cGAMP. This is Poxin (p26) from Bombyx mori (Silk moth).